Here is a 224-residue protein sequence, read N- to C-terminus: dTTP/UTP pyrophosphatase (224 aa).

D77 functions as the Proton acceptor in the catalytic mechanism.

It belongs to the Maf family. YhdE subfamily. Requires a divalent metal cation as cofactor.

It localises to the cytoplasm. It carries out the reaction dTTP + H2O = dTMP + diphosphate + H(+). It catalyses the reaction UTP + H2O = UMP + diphosphate + H(+). Its function is as follows. Nucleoside triphosphate pyrophosphatase that hydrolyzes dTTP and UTP. May have a dual role in cell division arrest and in preventing the incorporation of modified nucleotides into cellular nucleic acids. The chain is dTTP/UTP pyrophosphatase from Dehalococcoides mccartyi (strain CBDB1).